The primary structure comprises 204 residues: Protease (204 aa).

Active-site residues include His-54, Asp-71, and Cys-122.

It belongs to the peptidase C5 family. As to quaternary structure, interacts with protease cofactor pVI-C; this interaction is necessary for protease activation.

It localises to the virion. It is found in the host nucleus. It carries out the reaction Cleaves proteins of the adenovirus and its host cell at two consensus sites: -Yaa-Xaa-Gly-Gly-|-Xaa- and -Yaa-Xaa-Gly-Xaa-|-Gly- (in which Yaa is Met, Ile or Leu, and Xaa is any amino acid).. Its activity is regulated as follows. Requires DNA and protease cofactor for maximal activation. Inside nascent virions, becomes partially activated by binding to the viral DNA, allowing it to cleave the cofactor that binds to the protease and fully activates it. Actin, like the viral protease cofactor, seems to act as a cofactor in the cleavage of cytokeratin 18 and of actin itself. In terms of biological role, cleaves viral precursor proteins (pTP, pIIIa, pVI, pVII, pVIII, and pX) inside newly assembled particles giving rise to mature virions. Protease complexed to its cofactor slides along the viral DNA to specifically locate and cleave the viral precursors. Mature virions have a weakened organization compared to the unmature virions, thereby facilitating subsequent uncoating. Without maturation, the particle lacks infectivity and is unable to uncoat. Late in adenovirus infection, in the cytoplasm, may participate in the cytoskeleton destruction. Cleaves host cell cytoskeletal keratins K7 and K18. In Bos taurus (Bovine), this protein is Protease.